Consider the following 113-residue polypeptide: Nitrogenase vanadium-iron protein delta chain (113 aa).

Hexamer of two alpha, two beta, and two delta chains. The cofactor is iron-sulfur cluster. It depends on vanadium cation as a cofactor.

The enzyme catalyses N2 + 8 reduced [2Fe-2S]-[ferredoxin] + 16 ATP + 16 H2O = H2 + 8 oxidized [2Fe-2S]-[ferredoxin] + 2 NH4(+) + 16 ADP + 16 phosphate + 6 H(+). In terms of biological role, the key enzymatic reactions in nitrogen fixation are catalyzed by the nitrogenase complex, which has 2 components: the iron protein (component 2) and a component 1 which is either a molybdenum-iron protein, a vanadium-iron, or an iron-iron protein. The protein is Nitrogenase vanadium-iron protein delta chain (vnfG) of Azotobacter salinestris.